A 642-amino-acid chain; its full sequence is MEIENIVANTVYIKARESGGQKKGKSKKWKNYLQFPHYTECLPLKTEIEVTYAFVVEKQPIGKLLFHEFCQATNSQYHQCCQFLTKVEEYETSDDDGQSRRDLASSIVSLLHSKPEDNPSGSQDEQEFWCSFLSDEVISTCITTADSATHDDEPRSDIFTEPYRLTCQYLTDAPFKEFAESMYFHRFLQWKWLEKRPVDKHTFRLYRVLGKGGFGEVCACQVRASGKMYALKKLEKKRVKKRHAETLSLNEKQILQRINSPFVVSLAYAYETKDALCLVLTLMNGGDLKFHLYNLMPGGFDEKRVQFYAAEITLGLQHLHSERILYRDLKPENILLDDFGHVRISDLGLAVEIKDNEPIKGRVGTVGYMAPEIVKNERYSYGVDWWGVGCLIYEMIEGKAPFRQRKEKVKREEVERRVREDQEKYSEKFSEAARTLCRGLLHKEPGFRLGCRRVGRPEDGAEEIRAHPFFNTADTVTGREPVPWKKMEAGKVTPPFCPDPRAVYAKDVLDIEQFSTVKGVRLDATDTQFYGKFNTGCVSIPWQSEMIETECFAELNTFHDEDGNVMWNLRPDGINMDERRNGTSKPGFFSRLFRKKNIEVTKSLHDLSHLGVEQQQPPKTSTQTPAVRSSRAASASGRTLVI.

Residues 1–202 are N-terminal; the sequence is MEIENIVANT…LEKRPVDKHT (202 aa). The 137-residue stretch at 52–188 folds into the RGS domain; that stretch reads YAFVVEKQPI…AESMYFHRFL (137 aa). Positions 203–470 constitute a Protein kinase domain; the sequence is FRLYRVLGKG…AEEIRAHPFF (268 aa). ATP-binding positions include 209–217 and Lys-232; that span reads LGKGGFGEV. The Proton acceptor role is filled by Asp-328. An AGC-kinase C-terminal domain is found at 480 to 545; that stretch reads EPVPWKKMEA…GCVSIPWQSE (66 aa). The segment at 612-642 is disordered; sequence VEQQQPPKTSTQTPAVRSSRAASASGRTLVI. The span at 614-636 shows a compositional bias: low complexity; it reads QQQPPKTSTQTPAVRSSRAASAS.

It belongs to the protein kinase superfamily. AGC Ser/Thr protein kinase family. GPRK subfamily.

It carries out the reaction [G-protein-coupled receptor] + ATP = [G-protein-coupled receptor]-phosphate + ADP + H(+). Its function is as follows. Specifically phosphorylates the activated forms of G protein-coupled receptors. This Caenorhabditis elegans protein is G protein-coupled receptor kinase 1 (grk-1).